The primary structure comprises 809 residues: Sodium/hydrogen exchanger 2 (809 aa).

7 helical membrane passes run 107 to 127, 138 to 158, 169 to 189, 209 to 229, 237 to 257, 278 to 298, and 308 to 328; these read IVPE…IIFG, TDVF…YFMP, IFWY…VSLF, LFGS…FENI, ILVF…YNLF, FFVV…IAAF, and VIEP…AEMF. An N-linked (GlcNAc...) asparagine glycan is attached at Asn-350. Transmembrane regions (helical) follow at residues 361–381, 392–412, 430–450, and 459–479; these read YFMK…MGVS, AFVC…VFVL, FIIA…FLLP, and LFIT…GITI. Basic and acidic residues-rich tracts occupy residues 648-660 and 793-809; these read IRKD…ERRA and RASE…SDKP. Disordered regions lie at residues 648–700 and 734–809; these read IRKD…EADA and EVDA…SDKP.

Belongs to the monovalent cation:proton antiporter 1 (CPA1) transporter (TC 2.A.36) family. In terms of assembly, interacts with CHP1 and CHP2. As to expression, high levels in intestine and kidney. Strongly expressed in gastric epithelial cells, with particularly high expression levels in mucous cells.

Its subcellular location is the apical cell membrane. It catalyses the reaction Na(+)(in) + H(+)(out) = Na(+)(out) + H(+)(in). Its function is as follows. Plasma membrane Na(+)/H(+) antiporter. Mediates the electroneutral exchange of intracellular H(+) ions for extracellular Na(+). Major apical Na(+)/H(+) exchanger in the base of the colonic crypt. Controls in the colonic crypt intracellular pH (pHi) to direct colonic epithelial cell differentiation into the absorptive enterocyte lineage at the expense of the secretory lineage. This chain is Sodium/hydrogen exchanger 2 (SLC9A2), found in Oryctolagus cuniculus (Rabbit).